The chain runs to 266 residues: Hydroxyethylthiazole kinase (266 aa).

Position 43 (Met-43) interacts with substrate. The ATP site is built by Arg-119 and Thr-166. Residue Gly-193 coordinates substrate.

It belongs to the Thz kinase family. Requires Mg(2+) as cofactor.

It catalyses the reaction 5-(2-hydroxyethyl)-4-methylthiazole + ATP = 4-methyl-5-(2-phosphooxyethyl)-thiazole + ADP + H(+). It participates in cofactor biosynthesis; thiamine diphosphate biosynthesis; 4-methyl-5-(2-phosphoethyl)-thiazole from 5-(2-hydroxyethyl)-4-methylthiazole: step 1/1. Its function is as follows. Catalyzes the phosphorylation of the hydroxyl group of 4-methyl-5-beta-hydroxyethylthiazole (THZ). The sequence is that of Hydroxyethylthiazole kinase from Methanococcus maripaludis (strain DSM 14266 / JCM 13030 / NBRC 101832 / S2 / LL).